A 298-amino-acid polypeptide reads, in one-letter code: Pantothenate synthetase (298 aa).

30–37 contacts ATP; it reads MGNLHEGH. The active-site Proton donor is the histidine 37. Glutamine 61 lines the (R)-pantoate pocket. Beta-alanine is bound at residue glutamine 61. 149–152 contributes to the ATP binding site; that stretch reads GEKD. Residue glutamine 155 coordinates (R)-pantoate. ATP is bound by residues valine 178 and 186–189; that span reads MSSR.

Belongs to the pantothenate synthetase family. In terms of assembly, homodimer.

It localises to the cytoplasm. It catalyses the reaction (R)-pantoate + beta-alanine + ATP = (R)-pantothenate + AMP + diphosphate + H(+). Its pathway is cofactor biosynthesis; (R)-pantothenate biosynthesis; (R)-pantothenate from (R)-pantoate and beta-alanine: step 1/1. Functionally, catalyzes the condensation of pantoate with beta-alanine in an ATP-dependent reaction via a pantoyl-adenylate intermediate. The chain is Pantothenate synthetase from Aliivibrio salmonicida (strain LFI1238) (Vibrio salmonicida (strain LFI1238)).